An 87-amino-acid chain; its full sequence is NAD(P)H-quinone oxidoreductase subunit O (87 aa).

Over residues 1-10 (MSEQTGKVDD) the composition is skewed to basic and acidic residues. The tract at residues 1 to 26 (MSEQTGKVDDSQSPPKVQKKLRKGDL) is disordered.

This sequence belongs to the complex I NdhO subunit family. NDH-1 can be composed of about 15 different subunits; different subcomplexes with different compositions have been identified which probably have different functions.

It is found in the cellular thylakoid membrane. The catalysed reaction is a plastoquinone + NADH + (n+1) H(+)(in) = a plastoquinol + NAD(+) + n H(+)(out). It carries out the reaction a plastoquinone + NADPH + (n+1) H(+)(in) = a plastoquinol + NADP(+) + n H(+)(out). Its function is as follows. NDH-1 shuttles electrons from an unknown electron donor, via FMN and iron-sulfur (Fe-S) centers, to quinones in the respiratory and/or the photosynthetic chain. The immediate electron acceptor for the enzyme in this species is believed to be plastoquinone. Couples the redox reaction to proton translocation, and thus conserves the redox energy in a proton gradient. Cyanobacterial NDH-1 also plays a role in inorganic carbon-concentration. The polypeptide is NAD(P)H-quinone oxidoreductase subunit O (Prochlorococcus marinus (strain NATL1A)).